The primary structure comprises 568 residues: Sentrin-specific protease 3 (568 aa).

Positions 1 to 119 are disordered; sequence MKETIQGTGS…PSHRKTCSQR (119 aa). A phosphoserine mark is found at Ser-52, Ser-71, and Ser-73. Over residues 72–87 the composition is skewed to acidic residues; that stretch reads ASEEEEEEEEEDEEEV. Residues 106–119 are compositionally biased toward basic residues; sequence RALRPSHRKTCSQR. 2 short sequence motifs (nuclear localization signal) span residues 119–122 and 147–153; these read RRRR and RHRGRRR. The segment at 155-174 is disordered; sequence LAHPKNHLSPQEGGATPQVP. Residue Ser-163 is modified to Phosphoserine. Thr-170 is modified (phosphothreonine). Ser-175, Ser-182, Ser-206, and Ser-226 each carry phosphoserine. The segment at 380–537 is protease; it reads HVLTMDDLGT…AFVLQYCKHL (158 aa). Residues His-459 and Asp-476 contribute to the active site. The active-site Nucleophile is Cys-526.

This sequence belongs to the peptidase C48 family. Component of some MLL1/MLL complex, at least composed of the core components KMT2A/MLL1, ASH2L, HCFC1/HCF1, WDR5 and RBBP5, as well as the facultative components BACC1, CHD8, E2F6, HSP70, INO80C, KANSL1, LAS1L, MAX, MCRS1, MGA, MYST1/MOF, PELP1, PHF20, PRP31, RING2, RUVB1/TIP49A, RUVB2/TIP49B, SENP3, TAF1, TAF4, TAF6, TAF7, TAF9 and TEX10. Interacts with EP300, NPM1 and CDCA8. Component of the 5FMC complex, at least composed of PELP1, LAS1L, TEX10, WDR18 and SENP3; the complex interacts with methylated CHTOP and ZNF148. Interacts with NOL9. Interacts with CCAR2.

It localises to the nucleus. It is found in the nucleolus. Its subcellular location is the nucleoplasm. The protein resides in the cytoplasm. Its activity is regulated as follows. On oxidative stress, SENP3 degradation is blocked by inhibition of its ubiquitination, which stabilizes it as it accumulates in the nucleoplasm. Functionally, protease that releases SUMO2 and SUMO3 monomers from sumoylated substrates, but has only weak activity against SUMO1 conjugates. Deconjugates SUMO2 from MEF2D, which increases its transcriptional activation capability. Deconjugates SUMO2 and SUMO3 from CDCA8. Redox sensor that, when redistributed into nucleoplasm, can act as an effector to enhance HIF1A transcriptional activity by desumoylating EP300. Required for rRNA processing through deconjugation of SUMO2 and SUMO3 from nucleophosmin, NPM1. Plays a role in the regulation of sumoylation status of ZNF148. Functions as a component of the Five Friends of Methylated CHTOP (5FMC) complex; the 5FMC complex is recruited to ZNF148 by methylated CHTOP, leading to desumoylation of ZNF148 and subsequent transactivation of ZNF148 target genes. Deconjugates SUMO2 from KAT5. Catalyzes desumoylation of MRE11. This chain is Sentrin-specific protease 3 (Senp3), found in Mus musculus (Mouse).